The primary structure comprises 248 residues: Aspartate/glutamate leucyltransferase (248 aa).

The protein belongs to the R-transferase family. Bpt subfamily.

The protein localises to the cytoplasm. The enzyme catalyses N-terminal L-glutamyl-[protein] + L-leucyl-tRNA(Leu) = N-terminal L-leucyl-L-glutamyl-[protein] + tRNA(Leu) + H(+). It catalyses the reaction N-terminal L-aspartyl-[protein] + L-leucyl-tRNA(Leu) = N-terminal L-leucyl-L-aspartyl-[protein] + tRNA(Leu) + H(+). Functions in the N-end rule pathway of protein degradation where it conjugates Leu from its aminoacyl-tRNA to the N-termini of proteins containing an N-terminal aspartate or glutamate. The chain is Aspartate/glutamate leucyltransferase from Methylorubrum extorquens (strain PA1) (Methylobacterium extorquens).